Here is a 75-residue protein sequence, read N- to C-terminus: MLEKAKIDRINELSKKKKAGTLTATEKVEQDKLRKEYIKSFRTHMKGTIENTTIIDPNGTDVTPHKVKQLRKNKH.

The disordered stretch occupies residues 56–75 (DPNGTDVTPHKVKQLRKNKH). A compositionally biased stretch (basic residues) spans 65–75 (HKVKQLRKNKH).

Belongs to the UPF0291 family.

It localises to the cytoplasm. The protein is UPF0291 protein LMOf2365_1322 of Listeria monocytogenes serotype 4b (strain F2365).